The following is an 80-amino-acid chain: Crustacean hyperglycemic hormones (80 aa).

Cystine bridges form between C13–C49, C29–C45, and C32–C58. Valine amide is present on V78.

It belongs to the arthropod CHH/MIH/GIH/VIH hormone family. Produced by the medulla terminalis X-organ in the eyestalks and transported to the sinus gland where they are stored and released.

Its subcellular location is the secreted. Hormone found in the sinus gland of isopods and decapods which controls the blood sugar level. Has a secretagogue action over the amylase released from the midgut gland. May act as a stress hormone and may be involved in the control of molting and reproduction. The chain is Crustacean hyperglycemic hormones from Penaeus vannamei (Whiteleg shrimp).